Here is a 371-residue protein sequence, read N- to C-terminus: MAKFAPVQYKYIIKAEFEIDGIVDREDIIGAIFGQTEGLLGMELDLRELQKQGKLGRIEVEYKRVGNKTIGTITIPTSLKAVETSLIAAAIETVDRVGPAKARFRVKEIVDVRSSKREYIRNRAKELFVQLLSKTAPDIEELRRELEEAYYSKQLIEYGEEKLPAGPLVEKSDEIILVEGRADVVNLVKHGILNVLGMNGINIPKSVVELSKRKKVTLFIDGDRGGELVLRNLLAAGADIDYVAVAPPGREVEELTNKEILKALKSKIPLEQYIKNLRISINNDENKEKYKELLSKVFDTKKAIVFDEQFNIIDEKPLEEIDKLPSAYGIAIDKILDNETYAKIKGKYQLILALDSNVNAQERVITLKDIQ.

Positions 173 to 248 (DEIILVEGRA…DIDYVAVAPP (76 aa)) constitute a Toprim domain. Residues glutamate 179, aspartate 221, and aspartate 223 each coordinate Mg(2+).

This sequence belongs to the archaeal DnaG primase family. As to quaternary structure, forms a ternary complex with MCM helicase and DNA. Component of the archaeal exosome complex. Mg(2+) serves as cofactor.

The enzyme catalyses ssDNA + n NTP = ssDNA/pppN(pN)n-1 hybrid + (n-1) diphosphate.. Functionally, RNA polymerase that catalyzes the synthesis of short RNA molecules used as primers for DNA polymerase during DNA replication. Also part of the exosome, which is a complex involved in RNA degradation. Acts as a poly(A)-binding protein that enhances the interaction between heteromeric, adenine-rich transcripts and the exosome. This Nanoarchaeum equitans (strain Kin4-M) protein is DNA primase DnaG.